The chain runs to 562 residues: Oligo-1,6-glucosidase (562 aa).

D21, N23, D25, and D29 together coordinate Ca(2+). D199 (nucleophile) is an active-site residue. The Proton donor role is filled by E256.

The protein belongs to the glycosyl hydrolase 13 family.

It localises to the cytoplasm. It carries out the reaction Hydrolysis of (1-&gt;6)-alpha-D-glucosidic linkages in some oligosaccharides produced from starch and glycogen by alpha-amylase, and in isomaltose.. The chain is Oligo-1,6-glucosidase (malL) from Parageobacillus thermoglucosidasius (Geobacillus thermoglucosidasius).